The primary structure comprises 595 residues: Chaperone protein HscA homolog (595 aa).

Belongs to the heat shock protein 70 family.

In terms of biological role, chaperone involved in the maturation of iron-sulfur cluster-containing proteins. Has a low intrinsic ATPase activity which is markedly stimulated by HscB. This chain is Chaperone protein HscA homolog, found in Rickettsia conorii (strain ATCC VR-613 / Malish 7).